Here is a 292-residue protein sequence, read N- to C-terminus: Sulfhydrogenase 1 subunit gamma (292 aa).

The 101-residue stretch at 15–115 folds into the FAD-binding FR-type domain; the sequence is YALHRVKVLK…RGPYGNGFPV (101 aa). [2Fe-2S] cluster is bound by residues C253, C258, C261, and C273.

As to quaternary structure, heterotetramer of alpha, beta, gamma and delta subunits. The nickel-containing alpha and delta subunits constitute the hydrogenase activity. The beta and gamma subunits (flavin-containing dimer) constitute the sulfur reductase activity. FAD serves as cofactor. Requires [2Fe-2S] cluster as cofactor.

The protein resides in the cytoplasm. The catalysed reaction is n sulfur + H2 = (n-1) sulfur + hydrogen sulfide + H(+). With respect to regulation, stimulated by rubredoxin at pH 7.6 but not ferredoxin. Part of a bifunctional enzyme complex that functions as an NADPH-dependent hydrogen-evolving hydrogenase with sulfur reducing activity. May play a role in hydrogen cycling during fermentative growth. Activity not exhibited with NAD. The beta and gamma subunits form the sulfur reducing component that catalyzes the cytoplasmic production of hydrogen sulfide in the presence of elemental sulfur. Not active in the presence of sodium sulfate, sodium sulfite, sodium thiosulfate or cysteine. In Pyrococcus furiosus (strain ATCC 43587 / DSM 3638 / JCM 8422 / Vc1), this protein is Sulfhydrogenase 1 subunit gamma.